Here is a 188-residue protein sequence, read N- to C-terminus: Elongation factor P (188 aa).

Positions 139-163 are disordered; the sequence is PVTKGQTASSSYKPATLSNGVRTQV. The span at 142–160 shows a compositional bias: polar residues; the sequence is KGQTASSSYKPATLSNGVR.

It belongs to the elongation factor P family.

The protein resides in the cytoplasm. It participates in protein biosynthesis; polypeptide chain elongation. Its function is as follows. Involved in peptide bond synthesis. Stimulates efficient translation and peptide-bond synthesis on native or reconstituted 70S ribosomes in vitro. Probably functions indirectly by altering the affinity of the ribosome for aminoacyl-tRNA, thus increasing their reactivity as acceptors for peptidyl transferase. The chain is Elongation factor P from Methylobacterium nodulans (strain LMG 21967 / CNCM I-2342 / ORS 2060).